The chain runs to 113 residues: Replication initiation control protein YabA (113 aa).

Zn(2+) contacts are provided by H88, C90, C104, and C107.

The protein belongs to the YabA family. As to quaternary structure, homotetramer. Interacts with both DnaA and DnaN, acting as a bridge between these two proteins. Requires Zn(2+) as cofactor.

It is found in the cytoplasm. The protein resides in the nucleoid. In terms of biological role, involved in control of chromosome replication initiation. Inhibits the cooperative binding of DnaA to the oriC region, thus negatively regulating initiation of chromosome replication. Inhibits the ability of DnaA-ATP to form a helix on DNA; does not disassemble preformed DnaA-DNA helices. Decreases the residence time of DnaA on the chromosome at its binding sites (oriC, replication forks and promoter-binding sites). Tethers DnaA to the replication machinery via the DNA polymerase beta sliding clamp subunit (dnaN). Associates with oriC and other DnaA targets on the chromosome in a DnaA-dependent manner. The protein is Replication initiation control protein YabA of Staphylococcus saprophyticus subsp. saprophyticus (strain ATCC 15305 / DSM 20229 / NCIMB 8711 / NCTC 7292 / S-41).